A 378-amino-acid chain; its full sequence is Ribosomal RNA large subunit methyltransferase G (378 aa).

The protein belongs to the methyltransferase superfamily. RlmG family.

The protein localises to the cytoplasm. It catalyses the reaction guanosine(1835) in 23S rRNA + S-adenosyl-L-methionine = N(2)-methylguanosine(1835) in 23S rRNA + S-adenosyl-L-homocysteine + H(+). Specifically methylates the guanine in position 1835 (m2G1835) of 23S rRNA. The protein is Ribosomal RNA large subunit methyltransferase G of Enterobacter sp. (strain 638).